Reading from the N-terminus, the 501-residue chain is Dipeptide and tripeptide permease B (501 aa).

Topologically, residues methionine 1–arginine 27 are cytoplasmic. A helical transmembrane segment spans residues phenylalanine 28–serine 48. Residues glutamine 49 to serine 52 lie on the Periplasmic side of the membrane. Residues phenylalanine 53–valine 73 traverse the membrane as a helical segment. The Cytoplasmic segment spans residues glycine 74 to arginine 82. A helical membrane pass occupies residues threonine 83–tyrosine 103. The Periplasmic segment spans residues asparagine 104–aspartate 106. A helical membrane pass occupies residues leucine 107–alanine 127. Residues serine 128–threonine 146 are Cytoplasmic-facing. Residues leucine 147–alanine 167 form a helical membrane-spanning segment. Over aspartate 168–tyrosine 172 the chain is Periplasmic. Residues threonine 173–cysteine 193 traverse the membrane as a helical segment. The Cytoplasmic portion of the chain corresponds to arginine 194–tyrosine 211. The helical transmembrane segment at glycine 212–methionine 232 threads the bilayer. Position 233 (histidine 233) is a topological domain, periplasmic. Residues histidine 234–phenylalanine 254 traverse the membrane as a helical segment. Residues arginine 255–lysine 267 lie on the Cytoplasmic side of the membrane. A helical membrane pass occupies residues methionine 268–methionine 288. Over proline 289–proline 311 the chain is Periplasmic. Residues isoleucine 312 to isoleucine 332 form a helical membrane-spanning segment. Residues tyrosine 333–threonine 350 are Cytoplasmic-facing. Residues leucine 351–alanine 371 form a helical membrane-spanning segment. At aspartate 372 to tryptophan 380 the chain is on the periplasmic side. A helical transmembrane segment spans residues phenylalanine 381–leucine 401. At alanine 402–arginine 411 the chain is on the cytoplasmic side. The helical transmembrane segment at leucine 412–glycine 432 threads the bilayer. Residues tyrosine 433–aspartate 456 lie on the Periplasmic side of the membrane. The helical transmembrane segment at valine 457 to proline 477 threads the bilayer. At tryptophan 478–alanine 501 the chain is on the cytoplasmic side.

It belongs to the major facilitator superfamily. Proton-dependent oligopeptide transporter (POT/PTR) (TC 2.A.17) family. DtpB subfamily.

It is found in the cell inner membrane. Proton-dependent permease that transports di- and tripeptides. The chain is Dipeptide and tripeptide permease B from Aeromonas hydrophila subsp. hydrophila (strain ATCC 7966 / DSM 30187 / BCRC 13018 / CCUG 14551 / JCM 1027 / KCTC 2358 / NCIMB 9240 / NCTC 8049).